The chain runs to 220 residues: Ribosomal RNA small subunit methyltransferase G 1 (220 aa).

The S-adenosyl-L-methionine site is built by glycine 79, phenylalanine 84, and arginine 150.

The protein belongs to the methyltransferase superfamily. RNA methyltransferase RsmG family.

It is found in the cytoplasm. The catalysed reaction is guanosine(527) in 16S rRNA + S-adenosyl-L-methionine = N(7)-methylguanosine(527) in 16S rRNA + S-adenosyl-L-homocysteine. Functionally, specifically methylates the N7 position of guanine in position 527 of 16S rRNA. This Syntrophobacter fumaroxidans (strain DSM 10017 / MPOB) protein is Ribosomal RNA small subunit methyltransferase G 1.